We begin with the raw amino-acid sequence, 494 residues long: Protein transport protein Sec61 subunit alpha (494 aa).

The next 10 membrane-spanning stretches (helical) occupy residues 36–56 (LWTSIVVFLYLVCCQIPLYGI), 79–99 (LMELGISPIVTSGLVMQLLAG), 122–142 (LLGILITIGESVAYVLSGMYG), 147–167 (LGAGNAILIIVQLFTSGIIVI), 177–197 (YGIGSAISLFIATNVCESIVW), 249–269 (LLATVLVFVLVVYFQGFQVEL), 294–314 (MPIILQTALVSNLYFISQILY), 359–379 (IVSDPVHALLYIIFILASCAL), 426–446 (AAFGGMCIGALSIVADFMGAI), and 450–470 (TGILLAVTTIYQSWETILLAV).

Belongs to the SecY/SEC61-alpha family. In terms of assembly, heterotrimeric complex composed of SEC61-alpha, SEC61-beta and SEC61-gamma.

Its subcellular location is the endoplasmic reticulum membrane. Functionally, appears to play a crucial role in the insertion of secretory and membrane polypeptides into the ER. It is required for assembly of membrane and secretory proteins. The polypeptide is Protein transport protein Sec61 subunit alpha (Pyrenomonas salina).